A 485-amino-acid chain; its full sequence is Aspartyl/glutamyl-tRNA(Asn/Gln) amidotransferase subunit B (485 aa).

This sequence belongs to the GatB/GatE family. GatB subfamily. Heterotrimer of A, B and C subunits.

It carries out the reaction L-glutamyl-tRNA(Gln) + L-glutamine + ATP + H2O = L-glutaminyl-tRNA(Gln) + L-glutamate + ADP + phosphate + H(+). The enzyme catalyses L-aspartyl-tRNA(Asn) + L-glutamine + ATP + H2O = L-asparaginyl-tRNA(Asn) + L-glutamate + ADP + phosphate + 2 H(+). Functionally, allows the formation of correctly charged Asn-tRNA(Asn) or Gln-tRNA(Gln) through the transamidation of misacylated Asp-tRNA(Asn) or Glu-tRNA(Gln) in organisms which lack either or both of asparaginyl-tRNA or glutaminyl-tRNA synthetases. The reaction takes place in the presence of glutamine and ATP through an activated phospho-Asp-tRNA(Asn) or phospho-Glu-tRNA(Gln). In Bordetella petrii (strain ATCC BAA-461 / DSM 12804 / CCUG 43448), this protein is Aspartyl/glutamyl-tRNA(Asn/Gln) amidotransferase subunit B.